Reading from the N-terminus, the 197-residue chain is Phosphoheptose isomerase (197 aa).

The SIS domain maps to 34 to 196 (MVHCLLGGNK…DRTLFPQDEQ (163 aa)). 49 to 51 (NGG) provides a ligand contact to substrate. Zn(2+) is bound by residues H58 and E62. Residues E62, 91–92 (ND), 117–119 (STS), S122, and Q172 each bind substrate. Residues Q172 and H180 each contribute to the Zn(2+) site.

It belongs to the SIS family. GmhA subfamily. Homotetramer. Zn(2+) is required as a cofactor.

Its subcellular location is the cytoplasm. It catalyses the reaction 2 D-sedoheptulose 7-phosphate = D-glycero-alpha-D-manno-heptose 7-phosphate + D-glycero-beta-D-manno-heptose 7-phosphate. The protein operates within carbohydrate biosynthesis; D-glycero-D-manno-heptose 7-phosphate biosynthesis; D-glycero-alpha-D-manno-heptose 7-phosphate and D-glycero-beta-D-manno-heptose 7-phosphate from sedoheptulose 7-phosphate: step 1/1. Functionally, catalyzes the isomerization of sedoheptulose 7-phosphate in D-glycero-D-manno-heptose 7-phosphate. The protein is Phosphoheptose isomerase of Shewanella sediminis (strain HAW-EB3).